The primary structure comprises 689 residues: Glycine--tRNA ligase beta subunit (689 aa).

This sequence belongs to the class-II aminoacyl-tRNA synthetase family. In terms of assembly, tetramer of two alpha and two beta subunits.

The protein localises to the cytoplasm. The catalysed reaction is tRNA(Gly) + glycine + ATP = glycyl-tRNA(Gly) + AMP + diphosphate. In Desulforapulum autotrophicum (strain ATCC 43914 / DSM 3382 / VKM B-1955 / HRM2) (Desulfobacterium autotrophicum), this protein is Glycine--tRNA ligase beta subunit.